The sequence spans 806 residues: Transitional endoplasmic reticulum ATPase (806 aa).

A2 carries the N-acetylalanine modification. A phosphoserine mark is found at S3 and S7. A Glycyl lysine isopeptide (Lys-Gly) (interchain with G-Cter in SUMO2) cross-link involves residue K8. Phosphoserine is present on S13. A Glycyl lysine isopeptide (Lys-Gly) (interchain with G-Cter in SUMO2) cross-link involves residue K18. S37 is modified (phosphoserine). ATP is bound at residue 247 to 253 (PGTGKTL). K315 is modified (N6,N6,N6-trimethyllysine; by VCPKMT). ATP is bound by residues N348 and H384. At T436 the chain carries Phosphothreonine. At S462 the chain carries Phosphoserine. 2 positions are modified to N6-acetyllysine: K502 and K505. Residue 521-526 (GCGKTL) coordinates ATP. K668 carries the post-translational modification N6-acetyllysine; alternate. Position 668 is an N6-succinyllysine; alternate (K668). At S702 the chain carries Phosphoserine. The interval 708-727 (RRERERQTNPSAMEVEEDDP) is disordered. Residue K754 is modified to N6-acetyllysine. The segment at 768-806 (FGSFRFPSGNQGGAGPSQGSGGGTGGSVYTEDNDDDLYG) is disordered. Phosphoserine occurs at positions 770, 775, and 787. Gly residues predominate over residues 777–793 (NQGGAGPSQGSGGGTGG). Residues 797-806 (TEDNDDDLYG) form an interaction with UBXN6 region. The residue at position 805 (Y805) is a Phosphotyrosine.

It belongs to the AAA ATPase family. Homohexamer. Forms a ring-shaped particle of 12.5 nm diameter, that displays 6-fold radial symmetry. Part of a ternary complex containing STX5A, NSFL1C and VCP. NSFL1C forms a homotrimer that binds to one end of a VCP homohexamer. The complex binds to membranes enriched in phosphatidylethanolamine-containing lipids and promotes Golgi membrane fusion. Binds to a heterodimer of NPLOC4 and UFD1, binding to this heterodimer inhibits Golgi-membrane fusion. Interaction with VCIP135 leads to dissociation of the complex via ATP hydrolysis by VCP. Part of a ternary complex containing NPLOC4, UFD1 and VCP. Interacts with NSFL1C-like protein p37; the complex has membrane fusion activity and is required for Golgi and endoplasmic reticulum biogenesis. Interacts with SELENOS and SYVN1, as well as with DERL1 (via SHP-box motif), DERL2 and DERL3; which probably transfer misfolded proteins from the ER to VCP. Interacts with SVIP and DERL1. Component of a complex required to couple retrotranslocation, ubiquitination and deglycosylation composed of NGLY1, SAKS1, AMFR, VCP and RAD23B. Part of a complex composed of STUB1/CHIP, VCP/p97, CHRNA3, and UBXN2A that modulates the ubiquitination and endoplasmic reticulum-associated degradation (ERAD) of CHRNA3. Within the complex UBXN2A acts as a scaffold protein required for the interaction of CHRNA3 with VCP/p97, this interaction also inhibits CHRNA3 ubiquitination by STUB1/CHIP and subsequently ERAD. Interacts with UBXN2A (via UBX domain); the interaction is required for the interaction of CHRNA3 in the STUB1-VCP-UBXN2A complex. Directly interacts with UBXN4 and RNF19A. Interacts with CASR. Interacts with UBE4B and YOD1. Interacts with clathrin. Interacts with RNF103. Interacts with TRIM13 and TRIM21. Component of a VCP/p97-AMFR/gp78 complex that participates in the final step of the endoplasmic reticulum-associated degradation (ERAD) of HMGCR. Interacts directly with AMFR/gp78 (via its VIM). Interacts with RHBDD1 (via C-terminal domain). Interacts with SPRTN; leading to recruitment to stalled replication forks. Interacts with WASHC5. Interacts with UBOX5. Interacts (via N-terminus) with UBXN7, UBXN8, and probably several other UBX domain-containing proteins (via UBX domains); the interactions are mutually exclusive with VIM-dependent interactions such as those with AMFR and SELENOS. Forms a complex with UBQLN1 and UBXN4. Interacts (via the PIM motif) with RNF31 (via the PUB domain). Interacts with RIGI and RNF125; interaction takes place when RIGI is ubiquitinated via 'Lys-63'-linked ubiquitin on its CARD domains, leading to recruit RNF125 and promote ubiquitination and degradation of RIGI. Interacts with BAG6. Interacts with UBXN10. Interacts with UBXN6; the interaction with UBXN6 is direct and competitive with UFD1. Forms a ternary complex with CAV1 and UBXN6. Interacts with PLAA, UBXN6 and YOD1; may form a complex involved in macroautophagy. Interacts with ANKZF1. Interacts with ubiquitin-binding protein FAF1. Interacts with ZFAND2B (via VIM motif); the interaction is direct. Interacts with ZFAND1 (via its ubiquitin-like region); this interaction occurs in an arsenite-dependent manner. Interacts with CCDC47. Interacts with LMBR1L and UBAC2. Interacts with ATXN3. Interacts with TEX264; bridging VCP to covalent DNA-protein cross-links (DPCs). Mg(2+) serves as cofactor. In terms of processing, ISGylated. Post-translationally, methylation at Lys-315 catalyzed by VCPKMT is increased in the presence of ASPSCR1. Lys-315 methylation may decrease ATPase activity. Phosphorylated by tyrosine kinases in response to T-cell antigen receptor activation. Phosphorylated in mitotic cells.

The protein resides in the cytoplasm. It is found in the cytosol. The protein localises to the endoplasmic reticulum. Its subcellular location is the nucleus. It localises to the stress granule. The catalysed reaction is ATP + H2O = ADP + phosphate + H(+). Its function is as follows. Necessary for the fragmentation of Golgi stacks during mitosis and for their reassembly after mitosis. Involved in the formation of the transitional endoplasmic reticulum (tER). The transfer of membranes from the endoplasmic reticulum to the Golgi apparatus occurs via 50-70 nm transition vesicles which derive from part-rough, part-smooth transitional elements of the endoplasmic reticulum (tER). Vesicle budding from the tER is an ATP-dependent process. The ternary complex containing UFD1, VCP and NPLOC4 binds ubiquitinated proteins and is necessary for the export of misfolded proteins from the ER to the cytoplasm, where they are degraded by the proteasome. The NPLOC4-UFD1-VCP complex regulates spindle disassembly at the end of mitosis and is necessary for the formation of a closed nuclear envelope. Regulates E3 ubiquitin-protein ligase activity of RNF19A. Component of the VCP/p97-AMFR/gp78 complex that participates in the final step of the sterol-mediated ubiquitination and endoplasmic reticulum-associated degradation (ERAD) of HMGCR. Mediates the endoplasmic reticulum-associated degradation of CHRNA3 in cortical neurons as part of the STUB1-VCP-UBXN2A complex. Involved in endoplasmic reticulum stress-induced pre-emptive quality control, a mechanism that selectively attenuates the translocation of newly synthesized proteins into the endoplasmic reticulum and reroutes them to the cytosol for proteasomal degradation. Involved in clearance process by mediating G3BP1 extraction from stress granules. Also involved in DNA damage response: recruited to double-strand breaks (DSBs) sites in a RNF8- and RNF168-dependent manner and promotes the recruitment of TP53BP1 at DNA damage sites. Recruited to stalled replication forks by SPRTN: may act by mediating extraction of DNA polymerase eta (POLH) to prevent excessive translesion DNA synthesis and limit the incidence of mutations induced by DNA damage. Together with SPRTN metalloprotease, involved in the repair of covalent DNA-protein cross-links (DPCs) during DNA synthesis. Involved in interstrand cross-link repair in response to replication stress by mediating unloading of the ubiquitinated CMG helicase complex. Mediates extraction of PARP1 trapped to chromatin: recognizes and binds ubiquitinated PARP1 and promotes its removal. Required for cytoplasmic retrotranslocation of stressed/damaged mitochondrial outer-membrane proteins and their subsequent proteasomal degradation. Essential for the maturation of ubiquitin-containing autophagosomes and the clearance of ubiquitinated protein by autophagy. Acts as a negative regulator of type I interferon production by interacting with RIGI: interaction takes place when RIGI is ubiquitinated via 'Lys-63'-linked ubiquitin on its CARD domains, leading to recruit RNF125 and promote ubiquitination and degradation of RIGI. May play a role in the ubiquitin-dependent sorting of membrane proteins to lysosomes where they undergo degradation. May more particularly play a role in caveolins sorting in cells. By controlling the steady-state expression of the IGF1R receptor, indirectly regulates the insulin-like growth factor receptor signaling pathway. This Sus scrofa (Pig) protein is Transitional endoplasmic reticulum ATPase (VCP).